The primary structure comprises 131 residues: Protein E11 homolog (131 aa).

It belongs to the chordopoxvirinae E11 family.

Its subcellular location is the virion. The sequence is that of Protein E11 homolog from Fowlpox virus (strain NVSL) (FPV).